Reading from the N-terminus, the 143-residue chain is 6,7-dimethyl-8-ribityllumazine synthase (143 aa).

5-amino-6-(D-ribitylamino)uracil-binding positions include Phe-13, Thr-45–Asp-47, and Cys-69–Ile-71. Glu-74–Thr-75 serves as a coordination point for (2S)-2-hydroxy-3-oxobutyl phosphate. Catalysis depends on His-77, which acts as the Proton donor. Leu-102 is a binding site for 5-amino-6-(D-ribitylamino)uracil. Arg-117 contacts (2S)-2-hydroxy-3-oxobutyl phosphate.

This sequence belongs to the DMRL synthase family.

The catalysed reaction is (2S)-2-hydroxy-3-oxobutyl phosphate + 5-amino-6-(D-ribitylamino)uracil = 6,7-dimethyl-8-(1-D-ribityl)lumazine + phosphate + 2 H2O + H(+). Its pathway is cofactor biosynthesis; riboflavin biosynthesis; riboflavin from 2-hydroxy-3-oxobutyl phosphate and 5-amino-6-(D-ribitylamino)uracil: step 1/2. Functionally, catalyzes the formation of 6,7-dimethyl-8-ribityllumazine by condensation of 5-amino-6-(D-ribitylamino)uracil with 3,4-dihydroxy-2-butanone 4-phosphate. This is the penultimate step in the biosynthesis of riboflavin. This is 6,7-dimethyl-8-ribityllumazine synthase from Archaeoglobus fulgidus (strain ATCC 49558 / DSM 4304 / JCM 9628 / NBRC 100126 / VC-16).